The primary structure comprises 36 residues: Neurotoxin PRTx26An0C3 (36 aa).

3 disulfides stabilise this stretch: Cys-3/Cys-17, Cys-10/Cys-22, and Cys-16/Cys-34.

In terms of tissue distribution, expressed by the venom gland.

The protein resides in the secreted. Functionally, neurotoxin. Causes spastic paralysis and death in mice. Moderate inhibitor of L-type calcium channels (Cav1/CACNA1). This Phoneutria nigriventer (Brazilian armed spider) protein is Neurotoxin PRTx26An0C3.